The sequence spans 531 residues: 4-hydroxyphenylacetaldehyde oxime monooxygenase (531 aa).

A helical membrane pass occupies residues Trp-18 to Ser-38. Positions 122, 151, 466, and 468 each coordinate heme b.

This sequence belongs to the cytochrome P450 family. Requires heme b as cofactor.

It is found in the endoplasmic reticulum membrane. It catalyses the reaction (E)-4-hydroxyphenylacetaldehyde oxime + reduced [NADPH--hemoprotein reductase] + O2 = (S)-4-hydroxymandelonitrile + oxidized [NADPH--hemoprotein reductase] + 2 H2O + H(+). The catalysed reaction is (E)-4-hydroxyphenylacetaldehyde oxime = (Z)-(4-hydroxyphenyl)acetaldehyde oxime. It carries out the reaction (Z)-(4-hydroxyphenyl)acetaldehyde oxime = 4-hydroxyphenylacetonitrile + H2O. The enzyme catalyses 4-hydroxyphenylacetonitrile + reduced [NADPH--hemoprotein reductase] + O2 = (S)-4-hydroxymandelonitrile + oxidized [NADPH--hemoprotein reductase] + H2O + H(+). The protein operates within secondary metabolite biosynthesis; dhurrin biosynthesis; dhurrin from L-tyrosine: step 2/3. Functionally, cytochrome P450 involved in the biosynthesis of the cyanogenic glucoside dhurrin. Catalyzes the conversion of p-hydroxyphenylacetaldoxime to p-hydroxymandelonitrile via three different and successive activities: isomerization of the (E) isomer to the (Z) isomer of p-hydroxyphenylacetaldoxime, followed by dehydration of the oxime to the corresponding nitrile, and C-hydroxylation of the nitrile to produce p-hydroxymandelonitrile. This chain is 4-hydroxyphenylacetaldehyde oxime monooxygenase, found in Sorghum bicolor (Sorghum).